A 682-amino-acid chain; its full sequence is Nisin leader peptide-processing serine protease NisP (682 aa).

An N-terminal signal peptide occupies residues 1 to 22 (MKKILGFLFIVCSLGLSATVHG). A propeptide spanning residues 23–195 (ETTNSQQLLS…RKAKEVVSLR (173 aa)) is cleaved from the precursor. The region spanning 231–566 (QWDMKYVTNN…VDLLNGKNKA (336 aa)) is the Peptidase S8 domain. Active-site charge relay system residues include D259, H306, and S512. Residues 652–656 (LPVTG) carry the LPXTG sorting signal motif. At T655 the chain carries Pentaglycyl murein peptidoglycan amidated threonine. The propeptide at 656–682 (GDGEDFLPALGIVCISILGILKRKTKN) is removed by sortase.

This sequence belongs to the peptidase S8 family.

It is found in the secreted. The protein localises to the cell wall. It functions in the pathway antibiotic biosynthesis; nisin biosynthesis. Functionally, cleaves the lantibiotic nisin precursor peptide. This is Nisin leader peptide-processing serine protease NisP (nisP) from Lactococcus lactis subsp. lactis (Streptococcus lactis).